The sequence spans 367 residues: Serine/threonine-protein kinase Sgk2 (367 aa).

The segment at 1–28 is disordered; it reads MASSPVGVPSPQPSRANGNINLGPSANP. Ser10 bears the Phosphoserine mark. Residues 15–28 are compositionally biased toward polar residues; sequence RANGNINLGPSANP. Residues 35–292 form the Protein kinase domain; the sequence is FDFLKVIGKG…FLDIKNHMFF (258 aa). ATP is bound by residues 41–49 and Lys64; that span reads IGKGNYGKV. The Nuclear localization signal motif lies at 68-77; it reads KKSILKNKEQ. The active-site Proton acceptor is the Asp159. Thr193 is subject to Phosphothreonine; by PDPK1. One can recognise an AGC-kinase C-terminal domain in the interval 293 to 367; that stretch reads SPINWDDLYH…AQDDDDILDS (75 aa). Phosphoserine is present on residues Ser334 and Ser356. The residue at position 357 (Tyr357) is a Phosphotyrosine.

Belongs to the protein kinase superfamily. AGC Ser/Thr protein kinase family. Post-translationally, activated by phosphorylation on Ser-356 by an unknown kinase (may be mTORC2 but not confirmed), transforming it into a substrate for PDPK1 which then phosphorylates it on Thr-193. In terms of tissue distribution, expressed in the proximal tubule and thick ascending limb of the loop of Henle (TALH).

It is found in the cytoplasm. Its subcellular location is the nucleus. It catalyses the reaction L-seryl-[protein] + ATP = O-phospho-L-seryl-[protein] + ADP + H(+). The catalysed reaction is L-threonyl-[protein] + ATP = O-phospho-L-threonyl-[protein] + ADP + H(+). With respect to regulation, two specific sites, one in the kinase domain (Thr-193) and the other in the C-terminal regulatory region (Ser-356), need to be phosphorylated for its full activation. Serine/threonine-protein kinase which is involved in the regulation of a wide variety of ion channels, membrane transporters, cell growth, survival and proliferation. Up-regulates Na(+) channels: SCNN1A/ENAC, K(+) channels: KCNA3/Kv1.3, KCNE1 and KCNQ1, amino acid transporter: SLC6A19, glutamate transporter: SLC1A6/EAAT4, glutamate receptors: GRIA1/GLUR1 and GRIK2/GLUR6, Na(+)/H(+) exchanger: SLC9A3/NHE3, and the Na(+)/K(+) ATPase. The chain is Serine/threonine-protein kinase Sgk2 (Sgk2) from Rattus norvegicus (Rat).